We begin with the raw amino-acid sequence, 44 residues long: Thymosin beta-4 (44 aa).

Positions 1–44 (MSDKPDMGEIQKFNKSKLKKTETQEKNPLPSKETIEQEKQAGES) are disordered. Position 2 is an N-acetylserine (Ser2). Position 2 is a phosphoserine (Ser2). At Lys4 the chain carries N6-acetyllysine. Lys12 is modified (N6-acetyllysine; alternate). Residue Lys12 forms a Glycyl lysine isopeptide (Lys-Gly) (interchain with G-Cter in SUMO2); alternate linkage. Residue Thr23 is modified to Phosphothreonine. Lys26 carries the post-translational modification N6-acetyllysine. A Phosphoserine modification is found at Ser31. Lys32 bears the N6-acetyllysine mark. Basic and acidic residues predominate over residues 33-44 (ETIEQEKQAGES). Phosphothreonine is present on Thr34. Lys39 carries the N6-acetyllysine modification.

This sequence belongs to the thymosin beta family. In terms of assembly, identified in a complex composed of ACTA1, COBL, GSN AND TMSB4X. Interacts with SERPINB1. Post-translationally, acSDKP is inactivated by ACE, which removes the dipeptide Lys-Pro from its C-terminus.

Its subcellular location is the cytoplasm. The protein localises to the cytoskeleton. Its function is as follows. Plays an important role in the organization of the cytoskeleton. Binds to and sequesters actin monomers (G actin) and therefore inhibits actin polymerization. Potent inhibitor of bone marrow derived stem cell differentiation. Acts by inhibits the entry of hematopoietic pluripotent stem cells into the S-phase. In Notamacropus eugenii (Tammar wallaby), this protein is Thymosin beta-4 (TMSB4).